Consider the following 550-residue polypeptide: Probable methionine--tRNA ligase, cytoplasmic (550 aa).

The short motif at 10-20 is the 'HIGH' region element; the sequence is PYVNNQPHLGN. Residues 328–332 carry the 'KMSKS' region motif; it reads KFSKS. ATP is bound at residue K331.

The protein belongs to the class-I aminoacyl-tRNA synthetase family.

The protein resides in the cytoplasm. The catalysed reaction is tRNA(Met) + L-methionine + ATP = L-methionyl-tRNA(Met) + AMP + diphosphate. The polypeptide is Probable methionine--tRNA ligase, cytoplasmic (Encephalitozoon cuniculi (strain GB-M1) (Microsporidian parasite)).